Consider the following 383-residue polypeptide: BRISC and BRCA1-A complex member 2 (383 aa).

Methionine 1 is subject to N-acetylmethionine. At serine 2 the chain carries Phosphoserine. 2 UEV-like regions span residues 30-147 (DATN…TLLE) and 275-364 (IAAF…RAKA).

Belongs to the BABAM2 family. As to quaternary structure, component of the ARISC complex, at least composed of UIMC1/RAP80, ABRAXAS1, BRCC3/BRCC36, BABAM2 and BABAM1/NBA1. Component of the BRCA1-A complex, at least composed of BRCA1, BARD1, UIMC1/RAP80, ABRAXAS1, BRCC3/BRCC36, BABAM2 and BABAM1/NBA1. In the BRCA1-A complex, interacts directly with ABRAXAS1, BRCC3/BRCC36 and BABAM1/NBA1. Binds polyubiquitin. Component of the BRISC complex, at least composed of ABRAXAS2, BRCC3/BRCC36, BABAM2 and BABAM1/NBA1. Identified in a complex with SHMT2 and the other subunits of the BRISC complex. Component of the BRCA1/BRCA2 containing complex (BRCC), which also contains BRCA1, BRCA2, BARD1, BRCC3/BRCC36 and RAD51. BRCC is a ubiquitin E3 ligase complex that enhances cellular survival following DNA damage. May interact with FAS and TNFRSF1A. Expressed in brain, heart, kidney, liver, lung, testis, germinal center B-cells and various mouse cell lines.

It is found in the cytoplasm. Its subcellular location is the nucleus. In terms of biological role, component of the BRCA1-A complex, a complex that specifically recognizes 'Lys-63'-linked ubiquitinated histones H2A and H2AX at DNA lesions sites, leading to target the BRCA1-BARD1 heterodimer to sites of DNA damage at double-strand breaks (DSBs). The BRCA1-A complex also possesses deubiquitinase activity that specifically removes 'Lys-63'-linked ubiquitin on histones H2A and H2AX. In the BRCA1-A complex, it acts as an adapter that bridges the interaction between BABAM1/NBA1 and the rest of the complex, thereby being required for the complex integrity and modulating the E3 ubiquitin ligase activity of the BRCA1-BARD1 heterodimer. Probably also plays a role as a component of the BRISC complex, a multiprotein complex that specifically cleaves 'Lys-63'-linked ubiquitin. May regulate TNF-alpha signaling through its interactions with TNFRSF1A. Its function is as follows. Component of the BRCA1-A complex, a complex that specifically recognizes 'Lys-63'-linked ubiquitinated histones H2A and H2AX at DNA lesions sites, leading to target the BRCA1-BARD1 heterodimer to sites of DNA damage at double-strand breaks (DSBs). The BRCA1-A complex also possesses deubiquitinase activity that specifically removes 'Lys-63'-linked ubiquitin on histones H2A and H2AX. In the BRCA1-A complex, it acts as an adapter that bridges the interaction between BABAM1/NBA1 and the rest of the complex, thereby being required for the complex integrity and modulating the E3 ubiquitin ligase activity of the BRCA1-BARD1 heterodimer. Component of the BRISC complex, a multiprotein complex that specifically cleaves 'Lys-63'-linked ubiquitin in various substrates. Within the BRISC complex, acts as an adapter that bridges the interaction between BABAM1/NBA1 and the rest of the complex, thereby being required for the complex integrity. The BRISC complex is required for normal mitotic spindle assembly and microtubule attachment to kinetochores via its role in deubiquitinating NUMA1. The BRISC complex plays a role in interferon signaling via its role in the deubiquitination of the interferon receptor IFNAR1; deubiquitination increases IFNAR1 activity by enhancing its stability and cell surface expression. Down-regulates the response to bacterial lipopolysaccharide (LPS) via its role in IFNAR1 deubiquitination. May play a role in homeostasis or cellular differentiation in cells of neural, epithelial and germline origins. May also act as a death receptor-associated anti-apoptotic protein, which inhibits the mitochondrial apoptotic pathway. May regulate TNF-alpha signaling through its interactions with TNFRSF1A; however these effects may be indirect. This chain is BRISC and BRCA1-A complex member 2 (Babam2), found in Mus musculus (Mouse).